Reading from the N-terminus, the 673-residue chain is Leucine zipper putative tumor suppressor 3 (673 aa).

3 disordered regions span residues 1 to 157, 172 to 239, and 251 to 317; these read MAKL…CSEP, FHSM…QHLA, and IGTA…PPSP. Over residues 79–92 the composition is skewed to basic and acidic residues; the sequence is SRERPGRYPSEDKG. Over residues 173–186 the composition is skewed to polar residues; the sequence is HSMQNLCPPQTNGT. Positions 215–235 are enriched in low complexity; that stretch reads GLSDSGRNSLTSLPTYSSSYS. The segment covering 258-269 has biased composition (gly residues); sequence SGSGGSSGGGSG. Low complexity predominate over residues 274–294; it reads GTSDSGRASSKSGSSSSMGRP. A compositionally biased stretch (gly residues) spans 295-307; it reads GHLGSGEGGGGGL. Phosphoserine occurs at positions 316 and 318. Coiled-coil stretches lie at residues 317 to 496 and 571 to 639; these read PSAL…SLRD and RALR…RLRE. The segment at 635-673 is disordered; sequence RRLRERGAAGGASTPTPQHGEEKKAWTPSRLERIESTEI. Basic and acidic residues predominate over residues 653–673; it reads HGEEKKAWTPSRLERIESTEI.

It belongs to the LZTS3 family. As to quaternary structure, interacts (via C-terminus) with SHANK3 (via PDZ domain). Interacts (via coiled coil) with SIPA1L1. Can form homooligomers.

The protein localises to the synapse. It localises to the postsynaptic density. The protein resides in the cell projection. Its subcellular location is the dendritic spine. It is found in the dendrite. The protein localises to the cytoplasm. It localises to the cytoskeleton. Its function is as follows. May be involved in promoting the maturation of dendritic spines, probably via regulating SIPA1L1 levels at the postsynaptic density of synapses. The protein is Leucine zipper putative tumor suppressor 3 of Homo sapiens (Human).